The chain runs to 751 residues: Ribosomal RNA large subunit methyltransferase K/L (751 aa).

The region spanning 44-155 (LAYRTCLWSR…KNKLVLSIDL (112 aa)) is the THUMP domain.

It belongs to the methyltransferase superfamily. RlmKL family.

It localises to the cytoplasm. It catalyses the reaction guanosine(2445) in 23S rRNA + S-adenosyl-L-methionine = N(2)-methylguanosine(2445) in 23S rRNA + S-adenosyl-L-homocysteine + H(+). The enzyme catalyses guanosine(2069) in 23S rRNA + S-adenosyl-L-methionine = N(2)-methylguanosine(2069) in 23S rRNA + S-adenosyl-L-homocysteine + H(+). Its function is as follows. Specifically methylates the guanine in position 2445 (m2G2445) and the guanine in position 2069 (m7G2069) of 23S rRNA. The sequence is that of Ribosomal RNA large subunit methyltransferase K/L from Cellvibrio japonicus (strain Ueda107) (Pseudomonas fluorescens subsp. cellulosa).